Reading from the N-terminus, the 420-residue chain is Histidine--tRNA ligase (420 aa).

The protein belongs to the class-II aminoacyl-tRNA synthetase family. Homodimer.

It is found in the cytoplasm. It carries out the reaction tRNA(His) + L-histidine + ATP = L-histidyl-tRNA(His) + AMP + diphosphate + H(+). In Saccharopolyspora erythraea (strain ATCC 11635 / DSM 40517 / JCM 4748 / NBRC 13426 / NCIMB 8594 / NRRL 2338), this protein is Histidine--tRNA ligase.